An 811-amino-acid polypeptide reads, in one-letter code: Ribonucleoside-diphosphate reductase large subunit (811 aa).

Substrate contacts are provided by residues T231, 246-247, G277, 450-454, and 636-640; these read SC, NLCTE, and PTASS. A disulfide bond links C247 and C467. Catalysis depends on N450, which acts as the Proton acceptor. Catalysis depends on C452, which acts as the Cysteine radical intermediate. E454 acts as the Proton acceptor in catalysis.

This sequence belongs to the ribonucleoside diphosphate reductase large chain family. As to quaternary structure, heterotetramer composed of a homodimer of the large subunit (R1) and a homodimer of the small subunit (R2). Larger multisubunit protein complex are also active, composed of (R1)n(R2)n.

It catalyses the reaction a 2'-deoxyribonucleoside 5'-diphosphate + [thioredoxin]-disulfide + H2O = a ribonucleoside 5'-diphosphate + [thioredoxin]-dithiol. Ribonucleoside-diphosphate reductase holoenzyme provides the precursors necessary for viral DNA synthesis. Allows virus growth in non-dividing cells, as well as reactivation from latency in infected hosts. Catalyzes the biosynthesis of deoxyribonucleotides from the corresponding ribonucleotides. In Amazona oratrix (yellow-headed parrot), this protein is Ribonucleoside-diphosphate reductase large subunit.